Here is a 285-residue protein sequence, read N- to C-terminus: uncharacterized protein (285 aa).

Transmembrane regions (helical) follow at residues 7 to 29 (FYRLVKNTLLTAFILSLILLTLQ), 49 to 71 (LVVWNAYYTYFFIPEGVILSTFF), 95 to 117 (IFLYCSIPFLTFFLISALLSNTL), 137 to 156 (FFSEVPAGTFVSFGAVVLHA), 232 to 254 (KVVNYVNVATLPLFFFLSFTVAL), and 259 to 281 (GGLSYYAFASLFIVVHQLIIFVV).

It localises to the cell membrane. This is an uncharacterized protein from Aquifex aeolicus (strain VF5).